A 365-amino-acid polypeptide reads, in one-letter code: MTAAPLMPDSTHPCRRRKSYTFFWCSLGVYAEALLFLLSHLSDACELPRPFEAMELKGTPKLFYAVGEKIEYKCKKGYLYLSPYLMIATCEPNHTWVPISDAGCIKVQCTMLQDPSFGKVYYIDGSFSWGARAKFTCMEGYYVVGMSVLHCVLKGDDEAYWNGYPPHCEKIYCLPPPKIKNGTHTLTDINVFKYHEAVSYSCDPTPGPDKFSLVGTSMIFCAGHNTWSNSPPECKVVKCPNPVLQNGRLISGAGEIFSYQSTVMFECLQGFYMEGSSMVICSANNSWEPSIPKCLKGPRPTHPTKPPVYNYTGYPSPREGIFSQELDAWIIALIVITSIVGVFILCLIVLRCFEHRKKTNVSAAR.

A signal peptide spans 1-44 (MTAAPLMPDSTHPCRRRKSYTFFWCSLGVYAEALLFLLSHLSDA). 4 consecutive Sushi domains span residues 45 to 106 (CELP…GCIK), 107 to 170 (VQCT…HCEK), 171 to 236 (IYCL…ECKV), and 237 to 296 (VKCP…KCLK). Residues 45–329 (CELPRPFEAM…GIFSQELDAW (285 aa)) lie on the Extracellular side of the membrane. Cystine bridges form between Cys-109-Cys-151, Cys-137-Cys-168, Cys-173-Cys-221, Cys-202-Cys-234, Cys-239-Cys-281, and Cys-267-Cys-294. A glycan (N-linked (GlcNAc...) asparagine) is linked at Asn-181. A glycan (O-linked (GalNAc...) threonine) is linked at Thr-205. O-linked (GalNAc...) threonine glycosylation is found at Thr-301 and Thr-304. N-linked (GlcNAc...) asparagine glycosylation occurs at Asn-310. A glycan (O-linked (GalNAc...) threonine) is linked at Thr-312. Residues 330 to 350 (IIALIVITSIVGVFILCLIVL) traverse the membrane as a helical segment. Over 351–365 (RCFEHRKKTNVSAAR) the chain is Cytoplasmic.

In terms of assembly, interacts with C3b. Interacts with C4b. Interacts with moesin/MSN. Post-translationally, may be O-glycosylated. N-glycosylated. In terms of tissue distribution, present only in testis (at protein level).

Its subcellular location is the cytoplasmic vesicle. The protein localises to the secretory vesicle. It is found in the acrosome inner membrane. The protein resides in the secreted. Its function is as follows. May be involved in the fusion of the spermatozoa with the oocyte during fertilization. The sequence is that of Membrane cofactor protein (Cd46) from Mus musculus (Mouse).